A 305-amino-acid chain; its full sequence is Serine/threonine-protein phosphatase PP2A catalytic subunit (305 aa).

Asp-53, His-55, Asp-81, and Asn-113 together coordinate Mn(2+). His-114 serves as the catalytic Proton donor. Mn(2+) contacts are provided by His-163 and His-237.

The protein belongs to the PPP phosphatase family. PP-2A subfamily. Mn(2+) serves as cofactor.

It catalyses the reaction O-phospho-L-seryl-[protein] + H2O = L-seryl-[protein] + phosphate. It carries out the reaction O-phospho-L-threonyl-[protein] + H2O = L-threonyl-[protein] + phosphate. The protein is Serine/threonine-protein phosphatase PP2A catalytic subunit of Helianthus annuus (Common sunflower).